We begin with the raw amino-acid sequence, 189 residues long: Thioredoxin-like protein CITRX, chloroplastic (189 aa).

A chloroplast-targeting transit peptide spans 1–36 (MAMAAAASLLPACAAPTLPGRAFRPRRNSTPTASLS). The Thioredoxin domain maps to 72–189 (GSGKYIAPDY…MIRNIIDNEL (118 aa)). Residues C112 and C115 each act as nucleophile in the active site. A disulfide bridge connects residues C112 and C115.

Belongs to the thioredoxin family. Plant CITRX-type subfamily.

Its subcellular location is the plastid. The protein resides in the chloroplast. Functionally, probable thiol-disulfide oxidoreductase that may play a role in proper chloroplast development. This is Thioredoxin-like protein CITRX, chloroplastic from Oryza sativa subsp. indica (Rice).